Here is a 222-residue protein sequence, read N- to C-terminus: Germin-like protein subfamily 1 member 13 (222 aa).

A signal peptide spans 1–18; that stretch reads MRVSKSLILITLSALVIS. A disulfide bond links Cys32 and Cys49. The region spanning 63–214 is the Cupin type-1 domain; that stretch reads SGLNQAGSTN…AFQLDVNIVE (152 aa). N-linked (GlcNAc...) asparagine glycosylation is present at Asn78. Mn(2+) is bound by residues His111, His113, Glu118, and His160.

The protein belongs to the germin family. Oligomer (believed to be a pentamer but probably hexamer).

It localises to the secreted. It is found in the extracellular space. The protein resides in the apoplast. May play a role in plant defense. Probably has no oxalate oxidase activity even if the active site is conserved. The chain is Germin-like protein subfamily 1 member 13 (GLP6) from Arabidopsis thaliana (Mouse-ear cress).